The primary structure comprises 262 residues: Troponin T, slow skeletal muscle (262 aa).

The span at 1-31 (MSDTEEQEYEEEQAEDEEAVEEEEAPEEPEP) shows a compositional bias: acidic residues. 2 disordered regions span residues 1 to 62 (MSDT…ERVD) and 109 to 153 (ERAE…KKKV). Position 2 is a phosphoserine; by CK2 (serine 2). Residues 32 to 41 (VAEREEERPK) show a composition bias toward basic and acidic residues. A compositionally biased stretch (pro residues) spans 43-55 (SRPVVPPLIPPKI). Basic and acidic residues predominate over residues 109–149 (ERAEQQRFRTEKERERQAKLAEEKMRKEEEEAKKRAEDDAK).

It belongs to the troponin T family. Interacts with TPM3. Expressed in adult soleus muscle.

Troponin T is the tropomyosin-binding subunit of troponin, the thin filament regulatory complex which confers calcium-sensitivity to striated muscle actomyosin ATPase activity. The protein is Troponin T, slow skeletal muscle (Tnnt1) of Mus musculus (Mouse).